The sequence spans 273 residues: 4-hydroxy-tetrahydrodipicolinate reductase (273 aa).

NAD(+) contacts are provided by residues 12–17 and glutamate 38; that span reads GAGGRM. Arginine 39 contributes to the NADP(+) binding site. NAD(+) is bound by residues 102–104 and 126–129; these read GTT and AANF. The active-site Proton donor/acceptor is histidine 159. Residue histidine 160 participates in (S)-2,3,4,5-tetrahydrodipicolinate binding. Lysine 163 functions as the Proton donor in the catalytic mechanism. A (S)-2,3,4,5-tetrahydrodipicolinate-binding site is contributed by 169-170; the sequence is GT.

It belongs to the DapB family. As to quaternary structure, homotetramer.

It is found in the cytoplasm. It carries out the reaction (S)-2,3,4,5-tetrahydrodipicolinate + NAD(+) + H2O = (2S,4S)-4-hydroxy-2,3,4,5-tetrahydrodipicolinate + NADH + H(+). The enzyme catalyses (S)-2,3,4,5-tetrahydrodipicolinate + NADP(+) + H2O = (2S,4S)-4-hydroxy-2,3,4,5-tetrahydrodipicolinate + NADPH + H(+). It participates in amino-acid biosynthesis; L-lysine biosynthesis via DAP pathway; (S)-tetrahydrodipicolinate from L-aspartate: step 4/4. Its function is as follows. Catalyzes the conversion of 4-hydroxy-tetrahydrodipicolinate (HTPA) to tetrahydrodipicolinate. The polypeptide is 4-hydroxy-tetrahydrodipicolinate reductase (Salmonella gallinarum (strain 287/91 / NCTC 13346)).